The following is a 155-amino-acid chain: Ribosome maturation factor RimP (155 aa).

The protein belongs to the RimP family.

The protein resides in the cytoplasm. Its function is as follows. Required for maturation of 30S ribosomal subunits. The chain is Ribosome maturation factor RimP from Exiguobacterium sibiricum (strain DSM 17290 / CCUG 55495 / CIP 109462 / JCM 13490 / 255-15).